A 414-amino-acid polypeptide reads, in one-letter code: Putative transporter YoaB (414 aa).

Topologically, residues 1–11 (MLDKIGIPKRL) are cytoplasmic. The helical transmembrane segment at 12 to 32 (AWGFLGVVLFMMGDGLEQGWL) threads the bilayer. Over 33-47 (SPFLIENGLTVQQSA) the chain is Extracellular. The chain crosses the membrane as a helical span at residues 48–68 (SIFSIYGIALAIASWFSGVCL). Over 69–75 (EAFGAKR) the chain is Cytoplasmic. Residues 76 to 96 (TMFMGLLFYVIGTAAFIVFGF) traverse the membrane as a helical segment. The Extracellular portion of the chain corresponds to 97–107 (EQLNLPVMYVT). A helical membrane pass occupies residues 108 to 128 (YFVKGLGYPLFAYSFLTWVIY). Residues 129–136 (RTPQSKLS) are Cytoplasmic-facing. The chain crosses the membrane as a helical span at residues 137–157 (TAVGWFWIAYCLGMFVFGAWY). Topologically, residues 158-167 (SSYAIKAFGY) are extracellular. Residues 168–188 (LNTLWSSIFWVCLGAFFALFI) traverse the membrane as a helical segment. Topologically, residues 189-219 (NKDRFEKKKRKRSETAEELLKGVTILFTNPR) are cytoplasmic. Residues 220–240 (VLTGGIIRIINSIGTYGFPVF) traverse the membrane as a helical segment. Over 241 to 255 (LPMHMAQHGISTNVW) the chain is Extracellular. The helical transmembrane segment at 256–276 (LQIWGTIFLGNIVFNLIFGIV) threads the bilayer. The Cytoplasmic segment spans residues 277–286 (GDKFGWKNTV). Residues 287–307 (IWFGGVGCGIFTVLLYYAPVF) form a helical membrane-spanning segment. The Extracellular portion of the chain corresponds to 308–316 (SGGSLAVVS). The chain crosses the membrane as a helical span at residues 317 to 337 (VIGFIWGGLLAGYVPIGAIVP). Topologically, residues 338 to 343 (TVAGKD) are cytoplasmic. The chain crosses the membrane as a helical span at residues 344-364 (KGAAMSVLNLAAGLSAFVGPA). At 365 to 375 (LAWLFIGLVGA) the chain is on the extracellular side. The chain crosses the membrane as a helical span at residues 376-398 (QGVVWIFAALYLASAVLTKCIHI). At 399–414 (PEEKAVKEETSPQYAS) the chain is on the cytoplasmic side.

The protein belongs to the major facilitator superfamily. Sugar transporter (TC 2.A.1.1) family. CsbX subfamily.

Its subcellular location is the cell membrane. This Bacillus subtilis (strain 168) protein is Putative transporter YoaB (yoaB).